A 331-amino-acid polypeptide reads, in one-letter code: Ornithine carbamoyltransferase (331 aa).

Carbamoyl phosphate-binding positions include 55-58, Gln-82, Arg-106, and 133-136; these read STRT and HPTQ. Residues Asn-166, Asp-230, and 234-235 contribute to the L-ornithine site; that span reads SM. Carbamoyl phosphate contacts are provided by residues 272 to 273 and Arg-317; that span reads CL.

The protein belongs to the aspartate/ornithine carbamoyltransferase superfamily. OTCase family.

It is found in the cytoplasm. It carries out the reaction carbamoyl phosphate + L-ornithine = L-citrulline + phosphate + H(+). The protein operates within amino-acid biosynthesis; L-arginine biosynthesis; L-arginine from L-ornithine and carbamoyl phosphate: step 1/3. Reversibly catalyzes the transfer of the carbamoyl group from carbamoyl phosphate (CP) to the N(epsilon) atom of ornithine (ORN) to produce L-citrulline. The protein is Ornithine carbamoyltransferase (argF) of Neisseria gonorrhoeae.